The following is a 263-amino-acid chain: MKPMTMTDLNQLKKEKRKFATITAYDASFAHLFAEQGIDVMLVGDSLGMTVQGADTTIPVTVEDIVYHTRCVRAGTPYTFIIADMPFMSYATPEQSCENAAKLMRAGANMVKLEGGSWLYDTINMLTERSVPVCAHLGLTPQSVHILGGYKVQGRDEVSANQLIKDAITLEKAGIQLLVLECVPVDLAKRITDELQIPVIGIGAGNVTDGQVLVMHDTLGITVSPPKFVKNFLEEAGNIRDAIRLYKEQVESGIYPGKEHSFY.

Mg(2+) is bound by residues Asp-45 and Asp-84. 3-methyl-2-oxobutanoate contacts are provided by residues 45-46, Asp-84, and Lys-112; that span reads DS. Glu-114 lines the Mg(2+) pocket. The active-site Proton acceptor is Glu-181.

It belongs to the PanB family. As to quaternary structure, homodecamer; pentamer of dimers. Mg(2+) is required as a cofactor.

It is found in the cytoplasm. It catalyses the reaction 3-methyl-2-oxobutanoate + (6R)-5,10-methylene-5,6,7,8-tetrahydrofolate + H2O = 2-dehydropantoate + (6S)-5,6,7,8-tetrahydrofolate. It participates in cofactor biosynthesis; (R)-pantothenate biosynthesis; (R)-pantoate from 3-methyl-2-oxobutanoate: step 1/2. Functionally, catalyzes the reversible reaction in which hydroxymethyl group from 5,10-methylenetetrahydrofolate is transferred onto alpha-ketoisovalerate to form ketopantoate. The polypeptide is 3-methyl-2-oxobutanoate hydroxymethyltransferase (Photorhabdus laumondii subsp. laumondii (strain DSM 15139 / CIP 105565 / TT01) (Photorhabdus luminescens subsp. laumondii)).